The following is a 356-amino-acid chain: Acyl-coenzyme A diphosphatase NUDT19 (356 aa).

The region spanning 10-241 (AATVMLAAGW…IWLAPPQFYE (232 aa)) is the Nudix hydrolase domain. The interval 72–94 (PRFGLGPEPPRQPPFPGLSHGDA) is disordered. The span at 78 to 87 (PEPPRQPPFP) shows a compositional bias: pro residues. The Nudix box motif lies at 97–118 (AALPDDVALRICAIRETFEEAG). The Mg(2+) site is built by Glu-112 and Glu-116. Lys-299 is subject to N6-succinyllysine. Residues 354–356 (ARL) carry the Microbody targeting signal motif.

This sequence belongs to the Nudix hydrolase family. In terms of assembly, monomer. Requires Mg(2+) as cofactor. Mn(2+) is required as a cofactor.

It localises to the peroxisome. It carries out the reaction an acyl-CoA + H2O = an acyl-4'-phosphopantetheine + adenosine 3',5'-bisphosphate + 2 H(+). The enzyme catalyses CoA + H2O = (R)-4'-phosphopantetheine + adenosine 3',5'-bisphosphate + 2 H(+). It catalyses the reaction hexanoyl-CoA + H2O = hexanoyl-4'-phosphopantetheine + adenosine 3',5'-bisphosphate + 2 H(+). The catalysed reaction is octanoyl-CoA + H2O = S-octanoyl-4'-phosphopantetheine + adenosine 3',5'-bisphosphate + 2 H(+). It carries out the reaction butanoyl-CoA + H2O = S-butanoyl-4'-phosphopantetheine + adenosine 3',5'-bisphosphate + 2 H(+). The enzyme catalyses propanoyl-CoA + H2O = propanoyl-4'-phosphopantetheine + adenosine 3',5'-bisphosphate + 2 H(+). It catalyses the reaction malonyl-CoA + H2O = malonyl-4'-phosphopantetheine + adenosine 3',5'-bisphosphate + 2 H(+). The catalysed reaction is succinyl-CoA + H2O = succinyl-4'-phosphopantetheine + adenosine 3',5'-bisphosphate + 2 H(+). It carries out the reaction choloyl-CoA + H2O = S-choloyl-4'-phosphopantetheine + adenosine 3',5'-bisphosphate + 2 H(+). The enzyme catalyses 4,8-dimethylnonanoyl-CoA + H2O = S-(4,8-dimethylnonanoyl)-4'-phosphopantetheine + adenosine 3',5'-bisphosphate + 2 H(+). It catalyses the reaction (9Z,12Z,15Z)-octadecatrienoyl-CoA + H2O = S-(9Z,12Z,15Z-octadecatrienoyl)-4'-phosphopantetheine + adenosine 3',5'-bisphosphate + 2 H(+). The catalysed reaction is (9Z,12Z)-octadecadienoyl-CoA + H2O = S-(9Z,12Z-octadecadienoyl)-4'-phosphopantetheine + adenosine 3',5'-bisphosphate + 2 H(+). It carries out the reaction (9Z)-hexadecenoyl-CoA + H2O = S-(9Z-hexadecenoyl)-4'-phosphopantetheine + adenosine 3',5'-bisphosphate + 2 H(+). The enzyme catalyses (9Z)-tetradecenoyl-CoA + H2O = S-(9Z-tetradecenoyl)-4'-phosphopantetheine + adenosine 3',5'-bisphosphate + 2 H(+). It catalyses the reaction (6Z)-octenoyl-CoA + H2O = S-(6Z-octenoyl)-4'-phosphopantetheine + adenosine 3',5'-bisphosphate + 2 H(+). The catalysed reaction is hexadecanoyl-CoA + H2O = S-hexadecanoyl-4'-phosphopantetheine + adenosine 3',5'-bisphosphate + 2 H(+). It carries out the reaction tetradecanoyl-CoA + H2O = tetradecanoyl-4'-phosphopantetheine + adenosine 3',5'-bisphosphate + 2 H(+). The enzyme catalyses dodecanoyl-CoA + H2O = S-dodecanoyl-4'-phosphopantetheine + adenosine 3',5'-bisphosphate + 2 H(+). It catalyses the reaction a 5'-end CoA-ribonucleoside in mRNA + H2O = a 5'-end phospho-adenosine-phospho-ribonucleoside in mRNA + (R)-4'-phosphopantetheine + 2 H(+). Fatty acyl-coenzyme A (CoA) diphosphatase that hydrolyzes fatty acyl-CoA to yield acyl-4'-phosphopantetheine and adenosine 3',5'-bisphosphate. Mediates the hydrolysis of a wide range of CoA esters, including choloyl-CoA and branched-chain fatty-acyl-CoA esters and at low substrate concentrations medium and long-chain fatty-acyl-CoA esters are the primary substrates. Highest activity seen with medium-chain acyl-CoA esters and higher rates of activity seen with the unsaturated acyl-CoA esters compared with the saturated esters. Exhibits decapping activity towards dpCoA-capped RNAs in vitro. This chain is Acyl-coenzyme A diphosphatase NUDT19 (Nudt19), found in Mus saxicola (Brown spiny mouse).